Reading from the N-terminus, the 702-residue chain is Polyribonucleotide nucleotidyltransferase (702 aa).

Aspartate 485 and aspartate 491 together coordinate Mg(2+). One can recognise a KH domain in the interval 552 to 611 (PKTSTLQIDPEKIRDVIGAGGKVINKIIADTGVKIDIKEDGLVYVSSAESEGVKEAVKII). One can recognise an S1 motif domain in the interval 621-689 (GEIYLGKVTK…SQGRINLSRK (69 aa)).

It belongs to the polyribonucleotide nucleotidyltransferase family. Requires Mg(2+) as cofactor.

It is found in the cytoplasm. The enzyme catalyses RNA(n+1) + phosphate = RNA(n) + a ribonucleoside 5'-diphosphate. Functionally, involved in mRNA degradation. Catalyzes the phosphorolysis of single-stranded polyribonucleotides processively in the 3'- to 5'-direction. The polypeptide is Polyribonucleotide nucleotidyltransferase (Clostridium perfringens (strain 13 / Type A)).